Here is a 170-residue protein sequence, read N- to C-terminus: Calcineurin subunit B type 2 (170 aa).

A lipid anchor (N-myristoyl glycine) is attached at glycine 2. EF-hand domains lie at 18-46 (DEIK…FTSM), 50-85 (QENP…FSVR), 87-122 (DEEQ…MVGD), and 128-163 (QLQQ…LEIH). Ca(2+) contacts are provided by aspartate 63, aspartate 65, aspartate 67, glutamine 69, glutamate 74, aspartate 100, aspartate 102, aspartate 104, tyrosine 106, and glutamate 111. Positions 131–136 (QLVDKT) are calcineurin A binding. Aspartate 141, aspartate 143, aspartate 145, lysine 147, and glutamate 152 together coordinate Ca(2+).

The protein belongs to the calcineurin regulatory subunit family. In terms of assembly, forms a complex composed of a calmodulin-dependent catalytic subunit (also known as calcineurin A) and a regulatory Ca(2+)-binding subunit (also known as calcineurin B). There are three catalytic subunits, each encoded by a separate gene (PPP3CA, PPP3CB, and PPP3CC) and two regulatory subunits which are also encoded by separate genes (PPP3R1 and PPP3R2). Interacts with SPATA33 (via PQIIIT motif).

It localises to the mitochondrion. Functionally, regulatory subunit of calcineurin, a calcium-dependent, calmodulin stimulated protein phosphatase. Confers calcium sensitivity. This Bos taurus (Bovine) protein is Calcineurin subunit B type 2 (PPP3R2).